The sequence spans 962 residues: Translation initiation factor IF-2 (962 aa).

Disordered stretches follow at residues 122–263, 293–327, and 341–362; these read EVGV…EPAR, TEEVEVKEAPRKKRPRPEEFEKEAAERKAKGTRRK, and IAAQDDRGRLKGDKRRPFAKEP. Over residues 156-173 the composition is skewed to low complexity; that stretch reads AVEPQTVVPPVAAPAAEV. Residues 188–202 are compositionally biased toward basic and acidic residues; it reads KPPEEKETKVKHAEP. The span at 244–256 shows a compositional bias: basic residues; it reads RPKKAKKRRRKKV. Basic and acidic residues-rich tracts occupy residues 308-327 and 344-362; these read RPEEFEKEAAERKAKGTRRK and QDDRGRLKGDKRRPFAKEP. One can recognise a tr-type G domain in the interval 455–624; the sequence is RRPPVITVMG…LLQAELLELK (170 aa). A G1 region spans residues 464–471; the sequence is GHVDHGKT. 464–471 contributes to the GTP binding site; it reads GHVDHGKT. The tract at residues 489 to 493 is G2; the sequence is GITQH. A G3 region spans residues 510–513; that stretch reads DTPG. GTP is bound by residues 510-514 and 564-567; these read DTPGH and NKVD. The interval 564-567 is G4; the sequence is NKVD. The tract at residues 600 to 602 is G5; sequence SAK.

It belongs to the TRAFAC class translation factor GTPase superfamily. Classic translation factor GTPase family. IF-2 subfamily.

It localises to the cytoplasm. Functionally, one of the essential components for the initiation of protein synthesis. Protects formylmethionyl-tRNA from spontaneous hydrolysis and promotes its binding to the 30S ribosomal subunits. Also involved in the hydrolysis of GTP during the formation of the 70S ribosomal complex. In Syntrophobacter fumaroxidans (strain DSM 10017 / MPOB), this protein is Translation initiation factor IF-2.